Reading from the N-terminus, the 379-residue chain is 1-deoxy-D-xylulose 5-phosphate reductoisomerase (379 aa).

Residues Thr-10, Gly-11, Ser-12, Ile-13, Asn-39, and Asn-121 each coordinate NADPH. 1-deoxy-D-xylulose 5-phosphate is bound at residue Lys-122. Position 123 (Glu-123) interacts with NADPH. Residue Asp-147 participates in Mn(2+) binding. The 1-deoxy-D-xylulose 5-phosphate site is built by Ser-148, Glu-149, Ser-173, and His-196. Glu-149 contributes to the Mn(2+) binding site. Gly-202 is a binding site for NADPH. 1-deoxy-D-xylulose 5-phosphate is bound by residues Ser-209, Asn-214, Lys-215, and Glu-218. Glu-218 is a Mn(2+) binding site.

The protein belongs to the DXR family. Mg(2+) serves as cofactor. Requires Mn(2+) as cofactor.

The catalysed reaction is 2-C-methyl-D-erythritol 4-phosphate + NADP(+) = 1-deoxy-D-xylulose 5-phosphate + NADPH + H(+). It participates in isoprenoid biosynthesis; isopentenyl diphosphate biosynthesis via DXP pathway; isopentenyl diphosphate from 1-deoxy-D-xylulose 5-phosphate: step 1/6. Functionally, catalyzes the NADPH-dependent rearrangement and reduction of 1-deoxy-D-xylulose-5-phosphate (DXP) to 2-C-methyl-D-erythritol 4-phosphate (MEP). The chain is 1-deoxy-D-xylulose 5-phosphate reductoisomerase from Chlamydia caviae (strain ATCC VR-813 / DSM 19441 / 03DC25 / GPIC) (Chlamydophila caviae).